The primary structure comprises 393 residues: Chorismate synthase (393 aa).

NADP(+)-binding residues include Arg40 and Arg46. FMN-binding positions include 129-131, 249-250, Gly301, 316-320, and Arg342; these read RSS, QA, and KPIPT.

The protein belongs to the chorismate synthase family. Homotetramer. FMNH2 serves as cofactor.

The enzyme catalyses 5-O-(1-carboxyvinyl)-3-phosphoshikimate = chorismate + phosphate. Its pathway is metabolic intermediate biosynthesis; chorismate biosynthesis; chorismate from D-erythrose 4-phosphate and phosphoenolpyruvate: step 7/7. Catalyzes the anti-1,4-elimination of the C-3 phosphate and the C-6 proR hydrogen from 5-enolpyruvylshikimate-3-phosphate (EPSP) to yield chorismate, which is the branch point compound that serves as the starting substrate for the three terminal pathways of aromatic amino acid biosynthesis. This reaction introduces a second double bond into the aromatic ring system. The polypeptide is Chorismate synthase (Geotalea daltonii (strain DSM 22248 / JCM 15807 / FRC-32) (Geobacter daltonii)).